Here is a 288-residue protein sequence, read N- to C-terminus: MAAKIIDGKTIAQQVRSEVAQKVQARIAAGLRAPGLAVVLVGSNPASQIYVASKRKACEEVGFVSRSYDLPETTSEAELLELIDALNADNTIDGILVQLPLPAGIDNVKVLERIHPDKDVDGFHPYNVGRLCQRAPRLRPCTPRGIVTLLERYNIDTFGLNAVVIGASNIVGRPMSMELLLAGCTTTVTHRFTKNLRHHVENADLLIVAVGKPGFIPGDWIKEGAIVIDVGINRLENGKVVGDVVFEDAAKRASYITPVPGGVGPMTVATLIENTLQACVEYHDPQDE.

NADP(+) contacts are provided by residues 166–168 (GAS) and isoleucine 232.

This sequence belongs to the tetrahydrofolate dehydrogenase/cyclohydrolase family. Homodimer.

The enzyme catalyses (6R)-5,10-methylene-5,6,7,8-tetrahydrofolate + NADP(+) = (6R)-5,10-methenyltetrahydrofolate + NADPH. The catalysed reaction is (6R)-5,10-methenyltetrahydrofolate + H2O = (6R)-10-formyltetrahydrofolate + H(+). It functions in the pathway one-carbon metabolism; tetrahydrofolate interconversion. In terms of biological role, catalyzes the oxidation of 5,10-methylenetetrahydrofolate to 5,10-methenyltetrahydrofolate and then the hydrolysis of 5,10-methenyltetrahydrofolate to 10-formyltetrahydrofolate. The sequence is that of Bifunctional protein FolD from Escherichia coli O139:H28 (strain E24377A / ETEC).